Consider the following 447-residue polypeptide: N-succinylarginine dihydrolase (447 aa).

Substrate contacts are provided by residues 19–28, Asn-110, and 137–138; these read AGLSFGNEAS and HR. Residue Glu-174 is part of the active site. Arg-212 is a substrate binding site. The active site involves His-248. Substrate-binding residues include Asp-250 and Asn-359. Cys-365 acts as the Nucleophile in catalysis.

This sequence belongs to the succinylarginine dihydrolase family. Homodimer.

The catalysed reaction is N(2)-succinyl-L-arginine + 2 H2O + 2 H(+) = N(2)-succinyl-L-ornithine + 2 NH4(+) + CO2. It participates in amino-acid degradation; L-arginine degradation via AST pathway; L-glutamate and succinate from L-arginine: step 2/5. Its function is as follows. Catalyzes the hydrolysis of N(2)-succinylarginine into N(2)-succinylornithine, ammonia and CO(2). This chain is N-succinylarginine dihydrolase, found in Escherichia coli O8 (strain IAI1).